The primary structure comprises 311 residues: Formimidoylglutamase (311 aa).

6 residues coordinate Mn(2+): His130, Asp155, His157, Asp159, Cys242, and Asp244.

It belongs to the arginase family. The cofactor is Mn(2+).

The catalysed reaction is N-formimidoyl-L-glutamate + H2O = formamide + L-glutamate. It functions in the pathway amino-acid degradation; L-histidine degradation into L-glutamate; L-glutamate from N-formimidoyl-L-glutamate (hydrolase route): step 1/1. Its function is as follows. Catalyzes the conversion of N-formimidoyl-L-glutamate to L-glutamate and formamide. This is Formimidoylglutamase from Staphylococcus haemolyticus (strain JCSC1435).